Here is a 287-residue protein sequence, read N- to C-terminus: Cysteine-rich repeat secretory protein 58 (287 aa).

Residues M1 to A20 form the signal peptide. Residues I21–K267 are Extracellular-facing. Gnk2-homologous domains are found at residues D28–F130 and E135–S246. N-linked (GlcNAc...) asparagine glycans are attached at residues N39, N43, N59, N68, N89, N99, N107, N208, and N245. The chain crosses the membrane as a helical span at residues L268 to L286. A topological domain (cytoplasmic) is located at residue V287.

It belongs to the cysteine-rich repeat secretory protein family.

Its subcellular location is the membrane. This chain is Cysteine-rich repeat secretory protein 58 (CRRSP58), found in Arabidopsis thaliana (Mouse-ear cress).